A 482-amino-acid chain; its full sequence is MHYSQTSSFGGNHTEIAKIIHKFLQPRVKQYPLWNPPSREYMSRAMACQICEVTINEMDTLLICDACEKAYHLKCLQGNNMKGVPKSEWHCSRCVQAFNGKPFPPTYGRATRAVATTTAKMPFRAAGVLSSSAKKIGPMDIKANQQKPIVSTFSRLQNTGLVSGAATTSQFESASVNAKTTASAAKTTNIGSQGSKENVACGANSPAPVSLTETPNRTGIASTISVINNGLISKPLTPVGTMSSTSPLPVVNQLPVNATSNASPSTPITASLVAQAPTVTQNGDGSSTASGTADHSILNADITTQVHTLTVTSSSNSQQAVSHSEVAKATEDAAPLENVSECEKPSESTSHPDSLNDKTISENVQESSKDAKVDSEACQNHPTASPATVVPDQDSTITAAPSVTQEDSAFNTEKTPPQPLSVSSNYDSQTEKETPNVQDSVHNVPGDSEKGKGLNGLDDRHQEQPSEPEFYKSDSVKEENAA.

Residues 45-97 (AMACQICEVTINEMDTLLICDACEKAYHLKCLQGNNMKGVPKSEWHCSRCVQA) form a PHD-type zinc finger. 2 disordered regions span residues 188–210 (TNIG…APVS) and 314–482 (SSNS…ENAA). Positions 314–324 (SSNSQQAVSHS) are enriched in low complexity. Polar residues-rich tracts occupy residues 377-386 (ACQNHPTASP) and 393-428 (QDST…NYDS). The segment covering 447 to 482 (DSEKGKGLNGLDDRHQEQPSEPEFYKSDSVKEENAA) has biased composition (basic and acidic residues).

This Arabidopsis thaliana (Mouse-ear cress) protein is PHD finger protein At3g20280.